The sequence spans 452 residues: Photoreceptor ankyrin repeat protein (452 aa).

4 ANK repeats span residues 94–123 (CRLG…SPEE), 130–160 (NGRT…DVNQ), 164–193 (GGDT…GLDL), and 223–257 (RGKT…QLSQ). Disordered regions lie at residues 335-369 (LGTR…SPWV) and 405-427 (SKAS…QSLA). A compositionally biased stretch (pro residues) spans 349 to 362 (APPPPLVPQSPPGS). A compositionally biased stretch (polar residues) spans 406–424 (KASSSSHQCQPKPSPSGHQ).

Its subcellular location is the cytoplasm. It is found in the cytosol. The protein localises to the nucleus. In terms of biological role, acts as a transcriptional repressor for CRX-activated photoreceptor gene regulation. This Homo sapiens (Human) protein is Photoreceptor ankyrin repeat protein.